The primary structure comprises 206 residues: ATP-dependent Clp protease proteolytic subunit (206 aa).

Residue S108 is the Nucleophile of the active site. H133 is a catalytic residue.

This sequence belongs to the peptidase S14 family. In terms of assembly, fourteen ClpP subunits assemble into 2 heptameric rings which stack back to back to give a disk-like structure with a central cavity, resembling the structure of eukaryotic proteasomes.

Its subcellular location is the cytoplasm. The enzyme catalyses Hydrolysis of proteins to small peptides in the presence of ATP and magnesium. alpha-casein is the usual test substrate. In the absence of ATP, only oligopeptides shorter than five residues are hydrolyzed (such as succinyl-Leu-Tyr-|-NHMec, and Leu-Tyr-Leu-|-Tyr-Trp, in which cleavage of the -Tyr-|-Leu- and -Tyr-|-Trp bonds also occurs).. Functionally, cleaves peptides in various proteins in a process that requires ATP hydrolysis. Has a chymotrypsin-like activity. Plays a major role in the degradation of misfolded proteins. The protein is ATP-dependent Clp protease proteolytic subunit of Chromohalobacter salexigens (strain ATCC BAA-138 / DSM 3043 / CIP 106854 / NCIMB 13768 / 1H11).